Consider the following 926-residue polypeptide: Protein O-mannosyl-transferase Tmtc3 (926 aa).

Residues 1–26 are disordered; it reads MSTNPNPGIHQYAPSTLPREREREGA. The Cytoplasmic segment spans residues 1-36; that stretch reads MSTNPNPGIHQYAPSTLPREREREGATNSPQRNLLE. The helical transmembrane segment at 37-57 threads the bilayer; the sequence is FLCICVACIVCYYNSTQCGLV. The Extracellular portion of the chain corresponds to 58–114; the sequence is FDDISAIRDNKDLRPHTPLINVFLNDFWGTPMRKEQSHKSYRPLTVLTFRFNYLLHA. The chain crosses the membrane as a helical span at residues 115–135; it reads LEPFGYHLVNLLLHLSVCLLW. The Cytoplasmic portion of the chain corresponds to 136 to 169; sequence RRVCRLLLRQCAASGSNAISAPSSSSVSQLNTCA. A helical transmembrane segment spans residues 170–190; sequence FVASLLFAVHPVHTEAVTGVV. The Extracellular portion of the chain corresponds to 191 to 192; it reads GR. The chain crosses the membrane as a helical span at residues 193 to 213; the sequence is AELLSSICFLAAFLSYAKSVG. Residues 214–222 are Cytoplasmic-facing; the sequence is DSGCPRRTN. The next 2 membrane-spanning stretches (helical) occupy residues 223–239 and 240–259; these read WLTLFGCFGSCLLASML and CKEQGITIAGICVVYELFVV. Residues 260–303 are Cytoplasmic-facing; it reads HQLRPLHLCHFVLRLFDERTEQQSPKLANPSGIRRWSSSTLWKR. The helical transmembrane segment at 304–324 threads the bilayer; sequence LSFLVGITLTLLVGRVYVMGS. Over 325-345 the chain is Extracellular; it reads QLPIFTRFDNPASAADTPERQ. Residues 346–366 traverse the membrane as a helical segment; that stretch reads LTYGYLIYLNCWLLLCPSLLC. Topologically, residues 367–384 are cytoplasmic; sequence CDWTMGTVPLLQGFTDSR. The helical transmembrane segment at 385–405 threads the bilayer; the sequence is NITTLLTFLALGAMVAKTCFT. The Extracellular portion of the chain corresponds to 406–419; it reads RNLALSRTLIMCLG. A helical membrane pass occupies residues 420–440; it reads WMVLPFLPASNLFFPVGFVVA. Over 441–442 the chain is Cytoplasmic; it reads ER. Residues 443–463 traverse the membrane as a helical segment; it reads ILYMPSMGYCLLVAYGFEQLQ. Over 464–926 the chain is Extracellular; the sequence is RRGSLSWQRF…RPTHKSRKRS (463 aa). 9 TPR repeats span residues 514–547, 548–581, 596–630, 631–664, 665–698, 736–769, 770–803, 805–838, and 839–872; these read AKLYNNVGHALENEGKFEEALLYFQQAVRIQTDD, IGAHINVGRTFNNLKRYAEAEQAYVQAKALFPQA, LNVFINLANLIAKNQTRLEEADHLYRQAISMRSDY, VQAYINRGDILMKLNRTAQAQEVYEQALLYDNEN, ADIYYNLGVVFLEQGKSQQAQVYFNKAIELYPEH, EKVYFNLGMLAMDESSFDEAEQFFKRAIHLKADF, RSALFNLALLLADTKRPLDAVPFLNQLIRHHPSH, KGLILLGDIYINHMKDLDEAEKCYRSILHYDPHN, and TQGLHNLCVVFVERKRLAKAAACLQYAQRLAPAE. N-linked (GlcNAc...) asparagine glycosylation is found at N609 and N645.

This sequence belongs to the TMTC family.

The protein resides in the membrane. It is found in the endoplasmic reticulum. The catalysed reaction is a di-trans,poly-cis-dolichyl beta-D-mannosyl phosphate + L-seryl-[protein] = 3-O-(alpha-D-mannosyl)-L-seryl-[protein] + a di-trans,poly-cis-dolichyl phosphate + H(+). It carries out the reaction a di-trans,poly-cis-dolichyl beta-D-mannosyl phosphate + L-threonyl-[protein] = 3-O-(alpha-D-mannosyl)-L-threonyl-[protein] + a di-trans,poly-cis-dolichyl phosphate + H(+). It participates in protein modification; protein glycosylation. Transfers mannosyl residues to the hydroxyl group of serine or threonine residues. This is Protein O-mannosyl-transferase Tmtc3 from Drosophila melanogaster (Fruit fly).